We begin with the raw amino-acid sequence, 489 residues long: Probable guanine deaminase (489 aa).

Zn(2+) is bound by residues His100 and His102. Residues 102 to 105, 231 to 232, 258 to 261, and Asp348 each bind substrate; these read HVSQ, RF, and HLSE. Positions 258 and 348 each coordinate Zn(2+).

It belongs to the metallo-dependent hydrolases superfamily. ATZ/TRZ family. It depends on Zn(2+) as a cofactor.

It is found in the cytoplasm. It catalyses the reaction guanine + H2O + H(+) = xanthine + NH4(+). It functions in the pathway purine metabolism; guanine degradation; xanthine from guanine: step 1/1. Its function is as follows. Catalyzes the hydrolytic deamination of guanine, producing xanthine and ammonia. This Saccharomyces cerevisiae (strain ATCC 204508 / S288c) (Baker's yeast) protein is Probable guanine deaminase (GUD1).